Consider the following 226-residue polypeptide: Enolase-phosphatase E1 (226 aa).

This sequence belongs to the HAD-like hydrolase superfamily. MasA/MtnC family. Monomer. The cofactor is Mg(2+).

It catalyses the reaction 5-methylsulfanyl-2,3-dioxopentyl phosphate + H2O = 1,2-dihydroxy-5-(methylsulfanyl)pent-1-en-3-one + phosphate. It functions in the pathway amino-acid biosynthesis; L-methionine biosynthesis via salvage pathway; L-methionine from S-methyl-5-thio-alpha-D-ribose 1-phosphate: step 3/6. It participates in amino-acid biosynthesis; L-methionine biosynthesis via salvage pathway; L-methionine from S-methyl-5-thio-alpha-D-ribose 1-phosphate: step 4/6. In terms of biological role, bifunctional enzyme that catalyzes the enolization of 2,3-diketo-5-methylthiopentyl-1-phosphate (DK-MTP-1-P) into the intermediate 2-hydroxy-3-keto-5-methylthiopentenyl-1-phosphate (HK-MTPenyl-1-P), which is then dephosphorylated to form the acireductone 1,2-dihydroxy-3-keto-5-methylthiopentene (DHK-MTPene). The polypeptide is Enolase-phosphatase E1 (Shewanella frigidimarina (strain NCIMB 400)).